The following is a 224-amino-acid chain: Ribonuclease T (224 aa).

An Exonuclease domain is found at 32–206 (VVVDVETGGF…YDTEKTAELF (175 aa)). Mg(2+) is bound by residues Asp35, Glu37, His193, and Asp198. The Proton donor/acceptor role is filled by His193.

Belongs to the RNase T family. As to quaternary structure, homodimer. Mg(2+) serves as cofactor.

Functionally, trims short 3' overhangs of a variety of RNA species, leaving a one or two nucleotide 3' overhang. Responsible for the end-turnover of tRNA: specifically removes the terminal AMP residue from uncharged tRNA (tRNA-C-C-A). Also appears to be involved in tRNA biosynthesis. In Pseudomonas paraeruginosa (strain DSM 24068 / PA7) (Pseudomonas aeruginosa (strain PA7)), this protein is Ribonuclease T.